The following is a 680-amino-acid chain: MGKIKKKGTSGQAKNYITRTQAVRKLQISLPDFRRLCIFKGIYPREPRSKKKASKTSTPNTTFYYTKDIQYLLHEPLLRKFRDQKAVAKKIARSLGRGEVGDAARLEKNHAPKLTLDHVIKERYPTFIDALRDLDDALSLLFLFANLPSDAHVPPKTIALCQRLCHEFQHYLITTNSLRKSFLSIKGIYYQATIQGQDIMWLVPYRFVQRVNGDVDYRIMATFVDFYTTLLGFVNFRLYSSIGLRYPPKFDTRSDENGAELAAFTLEGRAVGDVPKAIEAGHTQRSSSANKEVSRDIQAKVDKVIKSAGLDQAKDEQTAETTEESSDTIDKFEPAAPEADTLAQPDLSGSQAGSLFAPFTFYISREAPRAPLEFLLRAFGCKRIGWDAVLGDGAFTNDETDPRITHQIVDRPQLPESSLPAIPAAAEEDSGAVQKVKPGTRIPGRTYVQPQWVWDCINEGKLVRPDLYSPGATLPPHLSPWVKPSRGGYDPRASLAEQEEEGEAEMAEDSDEEMEEAADEKSKTASKDEAESESEEDDDDESVDGGMDVAGTDDDESESESEEEDEDFGGFEDDEAASESEDEEEVARTQHQKELEAEAAGLPFSSNGATSDASKKKASQAKKIAAKKRKEEEEIERQKMMMSRKKRKLLEKMMYSNKKQSEEAAKLRSKRRKLEKGAAK.

The disordered stretch occupies residues 310-330 (LDQAKDEQTAETTEESSDTID). Residues 351–470 (QAGSLFAPFT…KLVRPDLYSP (120 aa)) enclose the BRCT domain. Residues 472–680 (ATLPPHLSPW…RRKLEKGAAK (209 aa)) form a disordered region. The stretch at 496–523 (AEQEEEGEAEMAEDSDEEMEEAADEKSK) forms a coiled coil. The span at 497–518 (EQEEEGEAEMAEDSDEEMEEAA) shows a compositional bias: acidic residues. A compositionally biased stretch (basic and acidic residues) spans 519–529 (DEKSKTASKDE). Acidic residues-rich tracts occupy residues 530-543 (AESESEEDDDDESV) and 551-585 (GTDDDESESESEEEDEDFGGFEDDEAASESEDEEE). The span at 586 to 596 (VARTQHQKELE) shows a compositional bias: basic and acidic residues. Positions 613 to 680 (ASKKKASQAK…RRKLEKGAAK (68 aa)) form a coiled coil. The span at 616-628 (KKASQAKKIAAKK) shows a compositional bias: basic residues. Positions 629 to 639 (RKEEEEIERQK) are enriched in basic and acidic residues.

This sequence belongs to the pescadillo family. Component of the NOP7 complex, composed of erb1, nop7 and ytm1. The complex is held together by erb1, which interacts with nop7 via its N-terminal domain and with ytm1 via a high-affinity interaction between the seven-bladed beta-propeller domains of the 2 proteins. The NOP7 complex associates with the 66S pre-ribosome.

The protein resides in the nucleus. Its subcellular location is the nucleolus. It localises to the nucleoplasm. In terms of biological role, component of the NOP7 complex, which is required for maturation of the 25S and 5.8S ribosomal RNAs and formation of the 60S ribosome. This chain is Pescadillo homolog (nop7), found in Aspergillus clavatus (strain ATCC 1007 / CBS 513.65 / DSM 816 / NCTC 3887 / NRRL 1 / QM 1276 / 107).